Reading from the N-terminus, the 197-residue chain is Probable chemoreceptor glutamine deamidase CheD 2 (197 aa).

The protein belongs to the CheD family.

The catalysed reaction is L-glutaminyl-[protein] + H2O = L-glutamyl-[protein] + NH4(+). Functionally, probably deamidates glutamine residues to glutamate on methyl-accepting chemotaxis receptors (MCPs), playing an important role in chemotaxis. This chain is Probable chemoreceptor glutamine deamidase CheD 2, found in Dechloromonas aromatica (strain RCB).